The sequence spans 101 residues: Large ribosomal subunit protein uL24 (101 aa).

The protein belongs to the universal ribosomal protein uL24 family. As to quaternary structure, part of the 50S ribosomal subunit.

Its function is as follows. One of two assembly initiator proteins, it binds directly to the 5'-end of the 23S rRNA, where it nucleates assembly of the 50S subunit. In terms of biological role, one of the proteins that surrounds the polypeptide exit tunnel on the outside of the subunit. The protein is Large ribosomal subunit protein uL24 of Streptococcus equi subsp. zooepidemicus (strain H70).